Here is a 258-residue protein sequence, read N- to C-terminus: MRRQRERKSMPDAVKKVYLIHGWGANRHMFDDLMPRLPATWPVSAVDLPGHGDAPFVRPFDIAAAADGIAAQIDAPADILGWSLGGLVALYLAARHPDKVRSLCLTASFARLTADEDYPEGLAAPALGKMVGAFRSDYAKHIKQFLQLQLLHTPDADGIIGRILPDLARCGTPQALQEALDAAERADARHLLDKIDVPVLLVFGGKDAITPPRMGEYLHRRLKGSRLVVMEKAAHAPFLSHAEAFAALYRDFVEGGLR.

Residues 17–241 (VYLIHGWGAN…KAAHAPFLSH (225 aa)) enclose the AB hydrolase-1 domain. Substrate contacts are provided by residues Trp23, 83 to 84 (SL), and 145 to 149 (FLQLQ). Ser83 functions as the Nucleophile in the catalytic mechanism. Active-site residues include Asp207 and His235. His235 lines the substrate pocket.

Belongs to the AB hydrolase superfamily. Carboxylesterase BioH family. In terms of assembly, monomer.

The protein resides in the cytoplasm. The enzyme catalyses 6-carboxyhexanoyl-[ACP] methyl ester + H2O = 6-carboxyhexanoyl-[ACP] + methanol + H(+). The protein operates within cofactor biosynthesis; biotin biosynthesis. The physiological role of BioH is to remove the methyl group introduced by BioC when the pimeloyl moiety is complete. It allows to synthesize pimeloyl-ACP via the fatty acid synthetic pathway through the hydrolysis of the ester bonds of pimeloyl-ACP esters. The sequence is that of Pimeloyl-[acyl-carrier protein] methyl ester esterase from Neisseria meningitidis serogroup B (strain ATCC BAA-335 / MC58).